The sequence spans 191 residues: Glutathione-dependent formaldehyde-activating enzyme (191 aa).

One can recognise a CENP-V/GFA domain in the interval 22-169 (FAGGTLQCLC…LTELGLTPYD (148 aa)). Residues cysteine 29, cysteine 31, cysteine 50, cysteine 52, cysteine 55, cysteine 97, and cysteine 100 each coordinate Zn(2+).

Belongs to the Gfa family. Zn(2+) serves as cofactor.

It catalyses the reaction S-(hydroxymethyl)glutathione = glutathione + formaldehyde. It participates in one-carbon metabolism; formaldehyde degradation; formate from formaldehyde (glutathione route): step 1/3. In terms of biological role, catalyzes the condensation of formaldehyde and glutathione to S-hydroxymethylglutathione. The protein is Glutathione-dependent formaldehyde-activating enzyme of Xanthomonas campestris pv. campestris (strain B100).